Here is a 477-residue protein sequence, read N- to C-terminus: Cytochrome P450 708A2 (477 aa).

The helical transmembrane segment at 3–23 threads the bilayer; the sequence is FVWSAAVWVIAVAAVVISKWL. Residue Cys426 coordinates heme.

It belongs to the cytochrome P450 family. It depends on heme as a cofactor. Expressed primarily in the root epidermis.

The protein resides in the membrane. Its function is as follows. Hydroxylates thalianol into thalian-diol. In Arabidopsis thaliana (Mouse-ear cress), this protein is Cytochrome P450 708A2 (CYP708A2).